Reading from the N-terminus, the 398-residue chain is Acetate kinase (398 aa).

Mg(2+) is bound at residue N7. K14 lines the ATP pocket. Residue R91 coordinates substrate. The active-site Proton donor/acceptor is the D148. ATP contacts are provided by residues 208 to 212 (HIGNG), 283 to 285 (DMR), and 331 to 335 (GVGEN). E384 is a binding site for Mg(2+).

This sequence belongs to the acetokinase family. In terms of assembly, homodimer. Requires Mg(2+) as cofactor. It depends on Mn(2+) as a cofactor.

Its subcellular location is the cytoplasm. The catalysed reaction is acetate + ATP = acetyl phosphate + ADP. The protein operates within metabolic intermediate biosynthesis; acetyl-CoA biosynthesis; acetyl-CoA from acetate: step 1/2. Its function is as follows. Catalyzes the formation of acetyl phosphate from acetate and ATP. Can also catalyze the reverse reaction. The chain is Acetate kinase from Bacteroides fragilis (strain ATCC 25285 / DSM 2151 / CCUG 4856 / JCM 11019 / LMG 10263 / NCTC 9343 / Onslow / VPI 2553 / EN-2).